A 166-amino-acid polypeptide reads, in one-letter code: NADPH-dependent 7-cyano-7-deazaguanine reductase (166 aa).

Cys57 functions as the Thioimide intermediate in the catalytic mechanism. Asp64 acts as the Proton donor in catalysis. Substrate-binding positions include 79–81 and 98–99; these read VES and HE.

The protein belongs to the GTP cyclohydrolase I family. QueF type 1 subfamily.

Its subcellular location is the cytoplasm. It carries out the reaction 7-aminomethyl-7-carbaguanine + 2 NADP(+) = 7-cyano-7-deazaguanine + 2 NADPH + 3 H(+). Its pathway is tRNA modification; tRNA-queuosine biosynthesis. In terms of biological role, catalyzes the NADPH-dependent reduction of 7-cyano-7-deazaguanine (preQ0) to 7-aminomethyl-7-deazaguanine (preQ1). The chain is NADPH-dependent 7-cyano-7-deazaguanine reductase from Alkaliphilus metalliredigens (strain QYMF).